Consider the following 135-residue polypeptide: Galectin-1 (135 aa).

Residue Ala-2 is modified to N-acetylalanine. The region spanning 4 to 135 (GLVASNLNLK…DFKIKCVAFD (132 aa)) is the Galectin domain. Lys-13 and Lys-29 each carry N6-acetyllysine. Phosphoserine; by FAM20C is present on Ser-30. Residues 45–49 (HFNPR), His-53, Asn-62, and 69–72 (WGTE) each bind a beta-D-galactoside. An N6-acetyllysine; alternate modification is found at Lys-108. Lys-108 carries the N6-succinyllysine; alternate modification. At Lys-128 the chain carries N6-acetyllysine.

Homodimer. Binds LGALS3BP. Interacts with CD2, CD3, CD4, CD6, CD7, CD43, ALCAM and CD45. Interacts with laminin (via poly-N-acetyllactosamine). Interacts with SUSD2. Interacts with cargo receptor TMED10; the interaction mediates the translocation from the cytoplasm into the ERGIC (endoplasmic reticulum-Golgi intermediate compartment) and thereby secretion. Interacts with CD69. As to expression, expressed in placenta, maternal decidua and fetal membranes. Within placenta, expressed in trophoblasts, stromal cells, villous endothelium, syncytiotrophoblast apical membrane and villous stroma. Within fetal membranes, expressed in amnion, chorioamniotic mesenchyma and chorion (at protein level). Expressed in cardiac, smooth, and skeletal muscle, neurons, thymus, kidney and hematopoietic cells.

Its subcellular location is the secreted. The protein resides in the extracellular space. It is found in the extracellular matrix. The protein localises to the cytoplasm. Its function is as follows. Lectin that binds beta-galactoside and a wide array of complex carbohydrates. Plays a role in regulating apoptosis, cell proliferation and cell differentiation. Inhibits CD45 protein phosphatase activity and therefore the dephosphorylation of Lyn kinase. Strong inducer of T-cell apoptosis. Plays a negative role in Th17 cell differentiation via activation of the receptor CD69. This Homo sapiens (Human) protein is Galectin-1.